A 636-amino-acid polypeptide reads, in one-letter code: Sodium-dependent nutrient amino acid transporter 1 (636 aa).

The tract at residues 1-40 (MELKTMPQNGANNGNPQGNTSNNNNTNDSSNSNSNNNNKT) is disordered. Residues 1-50 (MELKTMPQNGANNGNPQGNTSNNNNTNDSSNSNSNNNNKTERTNWSNGLE) lie on the Cytoplasmic side of the membrane. A compositionally biased stretch (low complexity) spans 7–40 (PQNGANNGNPQGNTSNNNNTNDSSNSNSNNNNKT). The next 3 helical transmembrane spans lie at 51–71 (FLMSCISVSVGLGNIWRFPFT), 78–98 (GAFLIPYIIVLFMIGKPMYYL), and 131–151 (TICIISYYSSLLALTLYYLAV). Residue asparagine 184 is glycosylated (N-linked (GlcNAc...) asparagine). Transmembrane regions (helical) follow at residues 225–245 (PDWKLTIALFVSWIVIFLVIM), 254–274 (AAYFLALFPYVVLFTLLGRAV), 303–323 (AVVQCFFSLAVGSGPIIMFSS), 337–357 (IVTTLDTLTSLLGGITIFAIL), 397–417 (LFSALFFFMLFVLGIGSIVAL), 436–456 (VALVTSICGFLMGLVYVTPGG), 469–489 (TYVVFILAIFELVGIAWIYGV), 511–531 (CWLIFTPIMMIVIFIYSMVTI), and 547–567 (VAGWLLFAIGASQFPLWGWWY).

This sequence belongs to the sodium:neurotransmitter symporter (SNF) (TC 2.A.22) family.

It localises to the membrane. Functionally, unusual broad substrate spectrum amino acid:sodium cotransporter that promotes absorption of the D isomers of essential amino acids. Neutral amino acids are the preferred substrates, especially methionine and phenylalanine. In Drosophila grimshawi (Hawaiian fruit fly), this protein is Sodium-dependent nutrient amino acid transporter 1.